Consider the following 87-residue polypeptide: Small ribosomal subunit protein bS16 (87 aa).

It belongs to the bacterial ribosomal protein bS16 family.

The sequence is that of Small ribosomal subunit protein bS16 from Aster yellows witches'-broom phytoplasma (strain AYWB).